A 456-amino-acid polypeptide reads, in one-letter code: MVKMLFFAFLPLLFMTGIAAESTISSGLNSLKTKIDAKMPSGKQLFDKVVEMQKQIDAKFSNDDERAKVMGAIGSLSTAVGKFQSGDPAKIASGCLDILVGISSVLKDFAKFSPIFSILSLVVGLFSGTKAEESVGSVVKKAVQEQSDQELQEALYGVKREYAVSKAFLDGVRNETSDLSPTEVSALAANVPIYQGVRFIAMVVQRIKYIKPKTESEIKRMLTMLELFTDLCSLRDLILLDLYQLVATPGHSPNIASGIKEVSNLGREEYKKVFEDLLKNDDKETYLFLSYLYPREKNEQSRKIFNFFDLMKVKYDDRLKQDLTGVKIFSNVHWPNYFMCSSNDYLALICTKPYGSLKLDKLNDGYYSIKTTQHDPKICHRYGNYILFTHKRNDDLEKFNFVPVKLEKREIYLLSSKESPNKFAYVPQNADGALFFVDGIPSKVGYGNQGYFTLVE.

The N-terminal stretch at methionine 1–alanine 20 is a signal peptide.

The protein belongs to the jellyfish toxin family. Type I subfamily. As to quaternary structure, oligomer. Post-translationally, contains disulfide bonds. In terms of tissue distribution, nematocytes.

The protein localises to the secreted. It localises to the nematocyst. Its subcellular location is the target cell membrane. In terms of biological role, may cause profound effects on the cardiovascular system of anesthetized rats (at 25 ug/kg), since the fraction containing this toxin and CfTX-2 produces an initial increase in mean arterial pressure, followed by cardiovascular collapse in all animals within 1 minute of injection. To note, the same fraction does not induce significant change in heart rate. Has weak hemolytic activity. Is lethal to crayfish. Causes cutaneous inflammation in humans. May act as a pore-forming toxin, disrupting normal transmembrane ion concentration gradients in susceptible cells. In Chironex fleckeri (Australian box jellyfish), this protein is Toxin CfTX-1.